Consider the following 397-residue polypeptide: Phosphoglycerate kinase (397 aa).

Substrate-binding positions include 25–27 (DLN), R41, 64–67 (HLGR), R118, and R151. ATP contacts are provided by residues K202, E324, and 350–353 (GGDT).

It belongs to the phosphoglycerate kinase family. As to quaternary structure, monomer.

The protein resides in the cytoplasm. The enzyme catalyses (2R)-3-phosphoglycerate + ATP = (2R)-3-phospho-glyceroyl phosphate + ADP. Its pathway is carbohydrate degradation; glycolysis; pyruvate from D-glyceraldehyde 3-phosphate: step 2/5. This chain is Phosphoglycerate kinase, found in Acidovorax ebreus (strain TPSY) (Diaphorobacter sp. (strain TPSY)).